A 274-amino-acid polypeptide reads, in one-letter code: Protein RecA (274 aa).

ATP is bound at residue 43 to 50 (GPESSGKT).

Belongs to the RecA family.

The protein resides in the cytoplasm. Functionally, can catalyze the hydrolysis of ATP in the presence of single-stranded DNA, the ATP-dependent uptake of single-stranded DNA by duplex DNA, and the ATP-dependent hybridization of homologous single-stranded DNAs. It interacts with LexA causing its activation and leading to its autocatalytic cleavage. The chain is Protein RecA from Neisseria polysaccharea.